Here is a 460-residue protein sequence, read N- to C-terminus: Chromosomal replication initiator protein DnaA 1 (460 aa).

Positions M1–K68 are domain I, interacts with DnaA modulators. The domain II stretch occupies residues K68–G102. The interval S103–V321 is domain III, AAA+ region. The ATP site is built by G151, G153, K154, and T155. A domain IV, binds dsDNA region spans residues M322 to I460.

This sequence belongs to the DnaA family. As to quaternary structure, oligomerizes as a right-handed, spiral filament on DNA at oriC.

It is found in the cytoplasm. Its function is as follows. Plays an essential role in the initiation and regulation of chromosomal replication. ATP-DnaA binds to the origin of replication (oriC) to initiate formation of the DNA replication initiation complex once per cell cycle. Binds the DnaA box (a 9 base pair repeat at the origin) and separates the double-stranded (ds)DNA. Forms a right-handed helical filament on oriC DNA; dsDNA binds to the exterior of the filament while single-stranded (ss)DNA is stabiized in the filament's interior. The ATP-DnaA-oriC complex binds and stabilizes one strand of the AT-rich DNA unwinding element (DUE), permitting loading of DNA polymerase. After initiation quickly degrades to an ADP-DnaA complex that is not apt for DNA replication. Binds acidic phospholipids. The chain is Chromosomal replication initiator protein DnaA 1 from Chlamydia pneumoniae (Chlamydophila pneumoniae).